A 114-amino-acid chain; its full sequence is UPF0342 protein LSEI_1724 (114 aa).

It belongs to the UPF0342 family.

In Lacticaseibacillus paracasei (strain ATCC 334 / BCRC 17002 / CCUG 31169 / CIP 107868 / KCTC 3260 / NRRL B-441) (Lactobacillus paracasei), this protein is UPF0342 protein LSEI_1724.